A 400-amino-acid polypeptide reads, in one-letter code: Dihydrolipoyllysine-residue succinyltransferase component of 2-oxoglutarate dehydrogenase complex (400 aa).

The Lipoyl-binding domain maps to 2-77; that stretch reads GVKIIVPSLG…AVGEEIGDIN (76 aa). The residue at position 43 (K43) is an N6-lipoyllysine. Positions 85-97 are enriched in polar residues; it reads NSNEAAKPQTASQ. The tract at residues 85 to 113 is disordered; that stretch reads NSNEAAKPQTASQPVPEKVPKKPAVANNT. In terms of domain architecture, Peripheral subunit-binding (PSBD) spans 113 to 150; it reads TLAPSVQKLVTENKLDPNNIKGTGKDGRITKGDVLETM. Residues H371 and D375 contribute to the active site.

This sequence belongs to the 2-oxoacid dehydrogenase family. In terms of assembly, forms a 24-polypeptide structural core with octahedral symmetry. Part of the 2-oxoglutarate dehydrogenase (OGDH) complex composed of E1 (2-oxoglutarate dehydrogenase), E2 (dihydrolipoamide succinyltransferase) and E3 (dihydrolipoamide dehydrogenase); the complex contains multiple copies of the three enzymatic components (E1, E2 and E3). The cofactor is (R)-lipoate.

The catalysed reaction is N(6)-[(R)-dihydrolipoyl]-L-lysyl-[protein] + succinyl-CoA = N(6)-[(R)-S(8)-succinyldihydrolipoyl]-L-lysyl-[protein] + CoA. It functions in the pathway amino-acid degradation; L-lysine degradation via saccharopine pathway; glutaryl-CoA from L-lysine: step 6/6. Functionally, E2 component of the 2-oxoglutarate dehydrogenase (OGDH) complex which catalyzes the second step in the conversion of 2-oxoglutarate to succinyl-CoA and CO(2). In Rickettsia bellii (strain RML369-C), this protein is Dihydrolipoyllysine-residue succinyltransferase component of 2-oxoglutarate dehydrogenase complex (sucB).